Reading from the N-terminus, the 365-residue chain is NAC domain-containing protein 43 (365 aa).

Residues 16 to 180 (VPPGFRFHPT…GWVVCRIFKK (165 aa)) form the NAC domain. A DNA-binding region spans residues 116-186 (IGMRKTLVFY…IFKKKNLHKT (71 aa)).

Expressed in various aboveground tissues undergoing thickening of the lignified secondary wall such as anthers, filaments of stamens, the base of carpels, styles, the boundaries between siliques and pedicels, the midrib of leaf veins, and inflorescence stems, specifically in interfascicular fibers (sclerenchyma), cells differentiating into vascular vessels, and xylary fibers (secondary xylem).

The protein localises to the nucleus. In terms of biological role, transcription activator of genes involved in biosynthesis of secondary walls. Together with NST2 and NST3, required for the secondary cell wall thickening of sclerenchymatous fibers, secondary xylem (tracheary elements), and of the anther endocethium, which is necessary for anther dehiscence. May also regulate the secondary cell wall lignification of other tissues. The sequence is that of NAC domain-containing protein 43 (NAC043) from Arabidopsis thaliana (Mouse-ear cress).